We begin with the raw amino-acid sequence, 120 residues long: Ribosome-binding factor A (120 aa).

This sequence belongs to the RbfA family. As to quaternary structure, monomer. Binds 30S ribosomal subunits, but not 50S ribosomal subunits or 70S ribosomes.

It localises to the cytoplasm. Functionally, one of several proteins that assist in the late maturation steps of the functional core of the 30S ribosomal subunit. Associates with free 30S ribosomal subunits (but not with 30S subunits that are part of 70S ribosomes or polysomes). Required for efficient processing of 16S rRNA. May interact with the 5'-terminal helix region of 16S rRNA. This Chlorobaculum parvum (strain DSM 263 / NCIMB 8327) (Chlorobium vibrioforme subsp. thiosulfatophilum) protein is Ribosome-binding factor A.